A 403-amino-acid chain; its full sequence is Peroxisomal membrane protein PEX13 (403 aa).

A compositionally biased stretch (pro residues) spans 1-11 (MASQPPPPPKP). The disordered stretch occupies residues 1-68 (MASQPPPPPK…PSQQTGSSSV (68 aa)). Over 1–134 (MASQPPPPPK…SSRGAFQSIE (134 aa)) the chain is Peroxisomal matrix. The span at 59–68 (PSQQTGSSSV) shows a compositional bias: polar residues. The helical transmembrane segment at 135 to 155 (SIVHAFASVSMMMDATFSAVY) threads the bilayer. A targeting to peroxisomes region spans residues 145–233 (MMMDATFSAV…EDRAATSAKS (89 aa)). The Cytoplasmic portion of the chain corresponds to 156–174 (NSFRAVLDVANHFSRLKIH). Residues 175 to 192 (FTKVFSAFALVRTIRYLY) traverse the membrane as a helical segment. Residues 175–196 (FTKVFSAFALVRTIRYLYRRLQ) form an interaction with PEX19 region. Residues 193 to 233 (RRLQRMLGLRRGSENEDLWAESEGTVACLGAEDRAATSAKS) lie on the Peroxisomal matrix side of the membrane. The helical transmembrane segment at 234–254 (WPIFLFFAVILGGPYLIWKLL) threads the bilayer. Topologically, residues 255–403 (STHSDEVTDS…IGKDGEKQDL (149 aa)) are cytoplasmic. The SH3 domain maps to 272 to 336 (DDHVVARAEY…PANYVKILGK (65 aa)). Residue serine 354 is modified to Phosphoserine.

The protein belongs to the peroxin-13 family. As to quaternary structure, interacts (via SH3 domain) with PEX14 (via SH3-binding motif); forming the PEX13-PEX14 docking complex. Interacts with PEX19.

It is found in the peroxisome membrane. Component of the PEX13-PEX14 docking complex, a translocon channel that specifically mediates the import of peroxisomal cargo proteins bound to PEX5 receptor. The PEX13-PEX14 docking complex forms a large import pore which can be opened to a diameter of about 9 nm. Mechanistically, PEX5 receptor along with cargo proteins associates with the PEX14 subunit of the PEX13-PEX14 docking complex in the cytosol, leading to the insertion of the receptor into the organelle membrane with the concomitant translocation of the cargo into the peroxisome matrix. Involved in the import of PTS1- and PTS2-type containing proteins. In Homo sapiens (Human), this protein is Peroxisomal membrane protein PEX13.